A 152-amino-acid polypeptide reads, in one-letter code: Putative membrane protein insertion efficiency factor (152 aa).

The disordered stretch occupies residues 81-152 (AAGGYDPVPG…IVGSGRGPWV (72 aa)).

The protein belongs to the UPF0161 family.

The protein resides in the cell membrane. Functionally, could be involved in insertion of integral membrane proteins into the membrane. In Frankia casuarinae (strain DSM 45818 / CECT 9043 / HFP020203 / CcI3), this protein is Putative membrane protein insertion efficiency factor.